Here is a 437-residue protein sequence, read N- to C-terminus: Adenylosuccinate synthetase (437 aa).

GTP is bound by residues 13-19 (GDEGKGK) and 41-43 (GHT). The Proton acceptor role is filled by Asp-14. Mg(2+) is bound by residues Asp-14 and Gly-41. IMP is bound by residues 14-17 (DEGK), 39-42 (NAGH), Thr-130, Arg-144, Gln-225, Thr-240, and Arg-310. The active-site Proton donor is the His-42. Residue 306-312 (ATTGRLR) participates in substrate binding. Residues Arg-312, 338-340 (KLD), and 421-423 (STG) each bind GTP.

This sequence belongs to the adenylosuccinate synthetase family. As to quaternary structure, homodimer. Requires Mg(2+) as cofactor.

The protein resides in the cytoplasm. The enzyme catalyses IMP + L-aspartate + GTP = N(6)-(1,2-dicarboxyethyl)-AMP + GDP + phosphate + 2 H(+). It functions in the pathway purine metabolism; AMP biosynthesis via de novo pathway; AMP from IMP: step 1/2. In terms of biological role, plays an important role in the de novo pathway of purine nucleotide biosynthesis. Catalyzes the first committed step in the biosynthesis of AMP from IMP. This chain is Adenylosuccinate synthetase, found in Psychromonas ingrahamii (strain DSM 17664 / CCUG 51855 / 37).